The chain runs to 537 residues: ATP-dependent 6-phosphofructokinase 5, chloroplastic (537 aa).

The transit peptide at 1-52 (MDALSQAISSGISVPYKNNSSSLVPSHGLTSLILRKSRSPVNPSSRSRVSVR) directs the protein to the chloroplast. Residues 35 to 64 (RKSRSPVNPSSRSRVSVRASEIQHSKTSAS) form a disordered region. Residues 39 to 54 (SPVNPSSRSRVSVRAS) are compositionally biased toward low complexity. Position 147 is a phosphoserine (Ser147). Residues Gly189, 253 to 254 (RG), and 278 to 281 (GNGT) each bind ATP. Asn279 contacts Mg(2+). Substrate is bound by residues 307–309 (TID), 352–354 (MGR), Glu408, and 460–463 (YMIR). Asp309 acts as the Proton acceptor in catalysis.

The protein belongs to the phosphofructokinase type A (PFKA) family. PPi-dependent PFK group II subfamily. Atypical ATP-dependent clade 'X' sub-subfamily. As to quaternary structure, homotetramer. The cofactor is Mg(2+). Expressed in roots, leaves, stems and flowers.

Its subcellular location is the plastid. The protein resides in the chloroplast. It carries out the reaction beta-D-fructose 6-phosphate + ATP = beta-D-fructose 1,6-bisphosphate + ADP + H(+). Its pathway is carbohydrate degradation; glycolysis; D-glyceraldehyde 3-phosphate and glycerone phosphate from D-glucose: step 3/4. Allosterically activated by AMP. Catalyzes the phosphorylation of D-fructose 6-phosphate to fructose 1,6-bisphosphate by ATP, the first committing step of glycolysis. This chain is ATP-dependent 6-phosphofructokinase 5, chloroplastic, found in Arabidopsis thaliana (Mouse-ear cress).